The sequence spans 208 residues: LysM and putative peptidoglycan-binding domain-containing protein 2 (208 aa).

The tract at residues 1 to 54 is disordered; the sequence is MAEFSPVLPPLRDDGGGGRYGQPLFPRSRSGSESDSELSQSLARTKTRSYGSTA. The span at 27–42 shows a compositional bias: low complexity; it reads RSRSGSESDSELSQSL. Residues 65–109 enclose the LysM domain; that stretch reads IEHRVTDGETLQGIALKYGVTMEQIKRVNKLFSNDCIFLRNTLSI. 2 disordered regions span residues 122–169 and 187–208; these read LSLE…EELS and AARKLKEDGGREEDDTNSYQEI. A compositionally biased stretch (polar residues) spans 129-140; sequence SEGNTPQESPCV. Residues 147 to 156 show a composition bias toward pro residues; the sequence is PSPPPEPSVP.

The sequence is that of LysM and putative peptidoglycan-binding domain-containing protein 2 (lysmd2) from Danio rerio (Zebrafish).